Consider the following 210-residue polypeptide: MPAIESGLLALILTGVLGYLLGSIPFGIVITRAFGLGDLRRIGSGNIGATNVLRTGNRPAALATLLLDSGKGAIAVLIARAAVGEDAAQLAAFTSFLGHLYPVWLGFRGGKGVATFLGTLIALAWPVGLACCLTWLATAAVSRISSLSALMAAASGVVWMLLLGQGQMAALGLVLAVLIFIRHHENIRRIANGTEPRIGKKASQDQSAEQ.

A run of 5 helical transmembrane segments spans residues 10–30 (ALIL…GIVI), 59–79 (PAAL…VLIA), 87–107 (AAQL…WLGF), 116–136 (FLGT…LTWL), and 161–181 (LLLG…LIFI).

This sequence belongs to the PlsY family. Probably interacts with PlsX.

Its subcellular location is the cell inner membrane. The enzyme catalyses an acyl phosphate + sn-glycerol 3-phosphate = a 1-acyl-sn-glycero-3-phosphate + phosphate. It functions in the pathway lipid metabolism; phospholipid metabolism. Catalyzes the transfer of an acyl group from acyl-phosphate (acyl-PO(4)) to glycerol-3-phosphate (G3P) to form lysophosphatidic acid (LPA). This enzyme utilizes acyl-phosphate as fatty acyl donor, but not acyl-CoA or acyl-ACP. This chain is Glycerol-3-phosphate acyltransferase, found in Cereibacter sphaeroides (strain ATCC 17025 / ATH 2.4.3) (Rhodobacter sphaeroides).